Here is a 161-residue protein sequence, read N- to C-terminus: MTSSSAPSRKALSKIACNRLQKELSEWQLNPPTGFRHKVTDNLQKWTIDVTGAPGTLYANETYQLQVEFPEHYPMEAPQVVFVSPAPSHPHIYSNGHICLDILYDSWSPAMTVNSVCISILSMLSSSPAKQRPADNDRYVKNCKNGRSPKETRWWFHDDKV.

One can recognise a UBC core domain in the interval 15–161 (IACNRLQKEL…TRWWFHDDKV (147 aa)). Cysteine 99 serves as the catalytic Glycyl thioester intermediate.

Belongs to the ubiquitin-conjugating enzyme family.

The catalysed reaction is S-ubiquitinyl-[E1 ubiquitin-activating enzyme]-L-cysteine + [E2 ubiquitin-conjugating enzyme]-L-cysteine = [E1 ubiquitin-activating enzyme]-L-cysteine + S-ubiquitinyl-[E2 ubiquitin-conjugating enzyme]-L-cysteine.. Its pathway is protein modification; protein ubiquitination. Functionally, accepts the ubiquitin from the E1 complex and catalyzes its covalent attachment to other proteins. The polypeptide is Ubiquitin-conjugating enzyme 15 (UBC15) (Arabidopsis thaliana (Mouse-ear cress)).